Consider the following 802-residue polypeptide: MEFSEKWLLDWLGFSISNVFYEQMTKSGIEVEAIAKISKNFERVIVGEVVERLYVNTMHNIVFLRVKLSEKKMIFSISSNDIEFSRGTKIAIATQDSKLFNNRLISMLRFKEKISEGMVCSFKDLGILNIKNKIVEICSEVPVGTDISKFLWFDDDRIIKVSSAPNRADGMSILGIARDMSALNNLCLPTLKEYHINITNHEKFRILINIPDVCLNFIGRTIQSVNLNRQTPLWILERLRRSSISSENVLVDIINYVLIELGQPIFSFNIHGIVQNIIIRTARDNEQFFDSCSQRVPIDKRTILLSDDKEILVLGNHTNSYNSRLSLSSHNIFLGCALFNPEYINNDSHFNFGFKNKITEYYSRGVDSDIQYKALNYVTYLVLKICGGNASNVVLANSSRVTVIQKKIFVLKKTLHRYVNNIISDTLVVKYLLQLGYLVEKQKHCWLVIPPSWRFDIQIQEDVISDLVRVFGYHNIPACALVTNYKLVHDDNIYTSLNRIKLLLVDLGYNEVITYSFVDSQIQKYLFPKRKQFFLLNPISRKMSSMRLSLWNGLLSSVLYNQNRQEKVMRFFESGLCFEEDGNEYLGVKQDLYLAGVISGYKNETDWRSFNKIVSFYDLKGDIELIMALLRKLDKVSFKKMLFQNLCPKQSAAIYFEREMIGVIGVISSNISKKMGLKYKTIVFELIWKKIAQSNDYRIRDVSLYPRCSRDISIIVNDSIAADEILKVSKNVFLDKIVEVKLFDVFYGKNVGLNKKSLSLRFIFGSSKRTLSEEIISNCLNECIRILQEKFNAILRDRNFLF.

In terms of domain architecture, tRNA-binding spans 38-148 (SKNFERVIVG…SEVPVGTDIS (111 aa)). A B5 domain is found at 403-478 (VIQKKIFVLK…RVFGYHNIPA (76 aa)). Residues Asp456, Asp462, and Asp466 each contribute to the Mg(2+) site. Residues 703–796 (SLYPRCSRDI…LQEKFNAILR (94 aa)) enclose the FDX-ACB domain.

Belongs to the phenylalanyl-tRNA synthetase beta subunit family. Type 1 subfamily. Tetramer of two alpha and two beta subunits. Mg(2+) is required as a cofactor.

It is found in the cytoplasm. It catalyses the reaction tRNA(Phe) + L-phenylalanine + ATP = L-phenylalanyl-tRNA(Phe) + AMP + diphosphate + H(+). The chain is Phenylalanine--tRNA ligase beta subunit from Buchnera aphidicola subsp. Baizongia pistaciae (strain Bp).